The primary structure comprises 330 residues: Protein TIFY 11f (330 aa).

Residues 61-97 (EAAAAAQLKIMYGGRMLVFDDFFPAGGAVVELVRAAA) form the Tify 1 domain. The Jas signature appears at 124–142 (PVVRKVSLQRFVEKRRRMR). The short motif at 126-133 (VRKVSLQR) is the Nuclear localization signal element. Positions 228 to 264 (EAAAAAQLKIMYGGRMLVFDDFFPAGGAVVELVRAAA) constitute a Tify 2 domain. The interval 267 to 330 (GRDDDGARAR…SGRTDDAAFY (64 aa)) is disordered.

It belongs to the TIFY/JAZ family. Ubiquitinated. Targeted for degradation by the SCF(COI1) E3 ubiquitin ligase-proteasome pathway during jasmonate signaling.

It is found in the nucleus. In terms of biological role, repressor of jasmonate responses. This is Protein TIFY 11f from Oryza sativa subsp. japonica (Rice).